A 263-amino-acid polypeptide reads, in one-letter code: Triosephosphate isomerase (263 aa).

10–12 (NWK) serves as a coordination point for substrate. The active-site Electrophile is histidine 104. Catalysis depends on glutamate 176, which acts as the Proton acceptor. Residues glycine 182, serine 221, and 242-243 (GG) contribute to the substrate site.

The protein belongs to the triosephosphate isomerase family. As to quaternary structure, homodimer.

The protein resides in the cytoplasm. The catalysed reaction is D-glyceraldehyde 3-phosphate = dihydroxyacetone phosphate. Its pathway is carbohydrate biosynthesis; gluconeogenesis. It participates in carbohydrate degradation; glycolysis; D-glyceraldehyde 3-phosphate from glycerone phosphate: step 1/1. Functionally, involved in the gluconeogenesis. Catalyzes stereospecifically the conversion of dihydroxyacetone phosphate (DHAP) to D-glyceraldehyde-3-phosphate (G3P). This chain is Triosephosphate isomerase, found in Haemophilus influenzae (strain 86-028NP).